The primary structure comprises 429 residues: Small ribosomal subunit protein bS1 (429 aa).

4 consecutive S1 motif domains span residues 55–128 (GDVV…LSKK), 144–211 (GDTV…SRKA), 231–299 (GEVV…LSIK), and 316–385 (GSVL…LSMK). Positions 382 to 399 (LSMKALEEKPEREDRRGN) are enriched in basic and acidic residues. Positions 382 to 412 (LSMKALEEKPEREDRRGNDGSASRADIAAYK) are disordered.

Belongs to the bacterial ribosomal protein bS1 family.

Binds mRNA; thus facilitating recognition of the initiation point. It is needed to translate mRNA with a short Shine-Dalgarno (SD) purine-rich sequence. This chain is Small ribosomal subunit protein bS1 (rps1), found in Leuconostoc lactis.